The primary structure comprises 213 residues: Endoplasmic reticulum vesicle protein 25 (213 aa).

Positions 1–20 (MILRIPSLLYLFTLLTAVYA) are cleaved as a signal peptide. The Lumenal segment spans residues 21–181 (VKFDLTSDRN…TNESTNQRVK (161 aa)). One can recognise a GOLD domain in the interval 33–122 (PSIIWNFASA…VRSVELDVDI (90 aa)). The chain crosses the membrane as a helical span at residues 182-202 (VFSVLIICCTIGLGVWQLLHL). Over 203–213 (RSFFKRKYLID) the chain is Cytoplasmic.

This sequence belongs to the EMP24/GP25L family.

It localises to the endoplasmic reticulum membrane. Its subcellular location is the golgi apparatus membrane. Its function is as follows. Constituent of COPII-coated endoplasmic reticulum-derived transport vesicles. Required for efficient transport of a subset of secretory proteins to the Golgi. Facilitates retrograde transport from the Golgi to the endoplasmic reticulum. This chain is Endoplasmic reticulum vesicle protein 25 (ERV25), found in Cryptococcus neoformans var. neoformans serotype D (strain B-3501A) (Filobasidiella neoformans).